The chain runs to 632 residues: Glycerophosphodiester phosphodiesterase domain-containing protein 4 (632 aa).

At 1-64 (MEETQDSSSS…GSCCCSRKEQ (64 aa)) the chain is on the cytoplasmic side. Residues 65 to 85 (FFYMCLVIAFILSVLFLFVWV) form a helical membrane-spanning segment. Over 86–114 (ETSNEYNGFDWVVYLGTGCWFFWSILVLS) the chain is Extracellular. The chain crosses the membrane as a helical span at residues 115 to 135 (AAGIMVAYTTLLLLLGFLLLW). Residues 136 to 147 (ERIELNLHTSHK) lie on the Cytoplasmic side of the membrane. The chain crosses the membrane as a helical span at residues 148 to 168 (VFICLVIVLCSFLLAVLSHFW). The Extracellular segment spans residues 169-180 (KDKWLIAGLSLQ). A helical membrane pass occupies residues 181-201 (IFAPFVHLSLITVMIIISWPL). Over 202-240 (SICVARLESEVKVRRYRMADYEQEIQERCNVFQRLRALQ) the chain is Cytoplasmic. The chain crosses the membrane as a helical span at residues 241-261 (IAAGLSFLIILLCLYLMPLGI). Over 262-542 (YSPCILKKEN…SRPLFFMTPG (281 aa)) the chain is Extracellular. The GP-PDE domain occupies 276-533 (PTLFGHRGAP…DNIELLNQLS (258 aa)). Residues Glu308, Asp310, and His323 each contribute to the a divalent metal cation site. 4 N-linked (GlcNAc...) asparagine glycosylation sites follow: Asn343, Asn349, Asn384, and Asn473. Residues 543 to 563 (FYMFMWLFLDIASAVIIGFVF) traverse the membrane as a helical segment. Topologically, residues 564–632 (CYNWIKEIKR…QKTEPKTENL (69 aa)) are cytoplasmic. The tract at residues 596–632 (ENNDASQQKPEVAPTSANLAPENMIELQKTEPKTENL) is disordered. Over residues 623 to 632 (QKTEPKTENL) the composition is skewed to basic and acidic residues.

Belongs to the glycerophosphoryl diester phosphodiesterase family. As to expression, detected in testis, in particular in spermatocytes.

Its subcellular location is the cytoplasm. It is found in the membrane. In Mus musculus (Mouse), this protein is Glycerophosphodiester phosphodiesterase domain-containing protein 4 (Gdpd4).